The chain runs to 195 residues: Imidazoleglycerol-phosphate dehydratase (195 aa).

Belongs to the imidazoleglycerol-phosphate dehydratase family.

Its subcellular location is the cytoplasm. It carries out the reaction D-erythro-1-(imidazol-4-yl)glycerol 3-phosphate = 3-(imidazol-4-yl)-2-oxopropyl phosphate + H2O. Its pathway is amino-acid biosynthesis; L-histidine biosynthesis; L-histidine from 5-phospho-alpha-D-ribose 1-diphosphate: step 6/9. The protein is Imidazoleglycerol-phosphate dehydratase of Bordetella bronchiseptica (strain ATCC BAA-588 / NCTC 13252 / RB50) (Alcaligenes bronchisepticus).